We begin with the raw amino-acid sequence, 285 residues long: Polyamine aminopropyltransferase (285 aa).

The region spanning 5 to 241 (DSWFTEHFQA…GWWSVTLSSK (237 aa)) is the PABS domain. Gln35 serves as a coordination point for S-methyl-5'-thioadenosine. Spermidine contacts are provided by His66 and Asp90. Residues Asp110 and 141-142 (DG) each bind S-methyl-5'-thioadenosine. The active-site Proton acceptor is the Asp160. 160 to 163 (DSTD) provides a ligand contact to spermidine. Pro167 lines the S-methyl-5'-thioadenosine pocket.

This sequence belongs to the spermidine/spermine synthase family. As to quaternary structure, homodimer or homotetramer.

It is found in the cytoplasm. The catalysed reaction is S-adenosyl 3-(methylsulfanyl)propylamine + putrescine = S-methyl-5'-thioadenosine + spermidine + H(+). The protein operates within amine and polyamine biosynthesis; spermidine biosynthesis; spermidine from putrescine: step 1/1. Its function is as follows. Catalyzes the irreversible transfer of a propylamine group from the amino donor S-adenosylmethioninamine (decarboxy-AdoMet) to putrescine (1,4-diaminobutane) to yield spermidine. In Xylella fastidiosa (strain 9a5c), this protein is Polyamine aminopropyltransferase.